Here is a 440-residue protein sequence, read N- to C-terminus: Oligodendrocyte-myelin glycoprotein (440 aa).

Positions 1 to 24 (MEYQILKMSLCLFILLFLTPGILC) are cleaved as a signal peptide. In terms of domain architecture, LRRNT spans 25–55 (ICPLQCICTERHRHVDCSGRNLSTLPSGLQE). 2 N-linked (GlcNAc...) asparagine glycosylation sites follow: Asn-45 and Asn-61. LRR repeat units lie at residues 56 to 77 (NIIH…LTQY), 79 to 100 (NLRT…LPRS), 101 to 121 (LWNM…DTAY), 124 to 145 (NLKY…KNTL), 147 to 168 (SLEV…MPSK), 169 to 189 (LHIV…TLIN), 192 to 213 (NLTH…SFDQ), and 216 to 239 (QLQE…TYLL). A glycan (N-linked (GlcNAc...) asparagine) is linked at Asn-103. Residues Asn-152, Asn-176, Asn-189, Asn-192, and Asn-234 are each glycosylated (N-linked (GlcNAc...) asparagine). Ser/Thr-rich repeat units lie at residues 229 to 270 (CDHK…YPTP), 271 to 292 (SGFT…INSL), 293 to 335 (SVVT…VPYP), 336 to 377 (EDTS…SPTP), and 378 to 416 (MTLS…TPLP). 2 N-linked (GlcNAc...) asparagine glycosylation sites follow: Asn-364 and Asn-389. Ser-417 carries the GPI-anchor amidated serine lipid modification. Positions 418-440 (VANAWKVNASFLLLLNVVVMLAV) are cleaved as a propeptide — removed in mature form. An N-linked (GlcNAc...) asparagine glycan is attached at Asn-425.

In terms of assembly, binds to RTN4R. Post-translationally, O-glycosylated in its Ser/Thr-rich repeat domain. As to expression, oligodendrocytes and myelin of the central nervous system.

The protein resides in the cell membrane. Functionally, cell adhesion molecule contributing to the interactive process required for myelination in the central nervous system. The protein is Oligodendrocyte-myelin glycoprotein (OMG) of Homo sapiens (Human).